The sequence spans 397 residues: Phosphoglycerate kinase (397 aa).

Residues 25-27 (DLN), Arg-41, 64-67 (HLGR), Arg-118, and Arg-151 contribute to the substrate site. ATP is bound by residues Lys-202, Glu-324, and 350–353 (GGDT).

Belongs to the phosphoglycerate kinase family. Monomer.

The protein localises to the cytoplasm. The enzyme catalyses (2R)-3-phosphoglycerate + ATP = (2R)-3-phospho-glyceroyl phosphate + ADP. It functions in the pathway carbohydrate degradation; glycolysis; pyruvate from D-glyceraldehyde 3-phosphate: step 2/5. This chain is Phosphoglycerate kinase, found in Paracidovorax citrulli (strain AAC00-1) (Acidovorax citrulli).